A 155-amino-acid chain; its full sequence is Catabolic 3-dehydroquinase (155 aa).

Tyrosine 24 functions as the Proton acceptor in the catalytic mechanism. Substrate-binding residues include asparagine 75, histidine 81, and aspartate 88. Histidine 101 acts as the Proton donor in catalysis. Substrate-binding positions include 102–103 (VS) and arginine 112.

The protein belongs to the type-II 3-dehydroquinase family. Homododecamer. Adopts a ring-like structure, composed of an arrangement of two hexameric rings stacked on top of one another.

The catalysed reaction is 3-dehydroquinate = 3-dehydroshikimate + H2O. The protein operates within aromatic compound metabolism; 3,4-dihydroxybenzoate biosynthesis; 3,4-dihydroxybenzoate from 3-dehydroquinate: step 1/2. Its function is as follows. Is involved in the catabolism of quinate. Allows the utilization of quinate as carbon source via the beta-ketoadipate pathway. The sequence is that of Catabolic 3-dehydroquinase from Penicillium rubens (strain ATCC 28089 / DSM 1075 / NRRL 1951 / Wisconsin 54-1255) (Penicillium chrysogenum).